A 216-amino-acid polypeptide reads, in one-letter code: ATP-dependent Clp protease proteolytic subunit (216 aa).

Ser120 acts as the Nucleophile in catalysis. Residue His145 is part of the active site.

It belongs to the peptidase S14 family. As to quaternary structure, fourteen ClpP subunits assemble into 2 heptameric rings which stack back to back to give a disk-like structure with a central cavity, resembling the structure of eukaryotic proteasomes.

The protein localises to the cytoplasm. It carries out the reaction Hydrolysis of proteins to small peptides in the presence of ATP and magnesium. alpha-casein is the usual test substrate. In the absence of ATP, only oligopeptides shorter than five residues are hydrolyzed (such as succinyl-Leu-Tyr-|-NHMec, and Leu-Tyr-Leu-|-Tyr-Trp, in which cleavage of the -Tyr-|-Leu- and -Tyr-|-Trp bonds also occurs).. Its function is as follows. Cleaves peptides in various proteins in a process that requires ATP hydrolysis. Has a chymotrypsin-like activity. Plays a major role in the degradation of misfolded proteins. The chain is ATP-dependent Clp protease proteolytic subunit from Cupriavidus metallidurans (strain ATCC 43123 / DSM 2839 / NBRC 102507 / CH34) (Ralstonia metallidurans).